The primary structure comprises 525 residues: Keratin, type II cytoskeletal 4 (525 aa).

The tract at residues 1–145 (MIARQSSVRG…DPEIQKIRTA (145 aa)) is head. Residue arginine 13 is modified to Omega-N-methylarginine. Residues 146-181 (EREQIKTLNNKFASFIDKVRFLEQQNKVLETKWNLL) form a coil 1A region. The 314-residue stretch at 146 to 459 (EREQIKTLNN…KLLEGEECRM (314 aa)) folds into the IF rod domain. A linker 1 region spans residues 182 to 200 (QQQTTTTSPKSLDPFFETY). Positions 201 to 292 (INALRKNLDT…VLYEAELAQM (92 aa)) are coil 1B. The interval 293-316 (QTHVSDTSVVLSMDNNRNLDLDGI) is linker 12. The segment at 317-455 (IAEVRAQYED…ATYRKLLEGE (139 aa)) is coil 2. The interval 456–524 (ECRMSGECKS…SSATITKRSP (69 aa)) is tail.

The protein belongs to the intermediate filament family. Heterotetramer of two type I and two type II keratins. Keratin-4 is generally associated with keratin-13. As to expression, expressed in the dorsal and ventral epithelium of the tongue. Highest expression levels are detected in the suprabasal layer with low levels detected in the basal cell layer. Within the suprabasal layer expression is highest in the spinous cells, decreases in the granular cells and is not detected in the stratum corneum.

The protein is Keratin, type II cytoskeletal 4 (Krt4) of Mus musculus (Mouse).